A 296-amino-acid chain; its full sequence is Uricase (296 aa).

Residues K14 and T61 each act as charge relay system in the active site. Residues T61, D62, F163, R180, V229, Q230, and N256 each coordinate urate. H258 (charge relay system) is an active-site residue.

This sequence belongs to the uricase family.

The protein resides in the peroxisome. The protein localises to the cytoplasm. It is found in the nucleus. The enzyme catalyses urate + O2 + H2O = 5-hydroxyisourate + H2O2. It functions in the pathway purine metabolism; urate degradation; (S)-allantoin from urate: step 1/3. Its function is as follows. Catalyzes the oxidation of uric acid to 5-hydroxyisourate, which is further processed to form (S)-allantoin. This chain is Uricase, found in Schizosaccharomyces pombe (strain 972 / ATCC 24843) (Fission yeast).